A 157-amino-acid chain; its full sequence is 3-dehydroquinate dehydratase (157 aa).

Tyrosine 24 (proton acceptor) is an active-site residue. The substrate site is built by asparagine 75, histidine 81, and aspartate 88. Histidine 101 (proton donor) is an active-site residue. Substrate-binding positions include 102-103 (LS) and arginine 112.

Belongs to the type-II 3-dehydroquinase family. In terms of assembly, homododecamer.

The catalysed reaction is 3-dehydroquinate = 3-dehydroshikimate + H2O. Its pathway is metabolic intermediate biosynthesis; chorismate biosynthesis; chorismate from D-erythrose 4-phosphate and phosphoenolpyruvate: step 3/7. Its function is as follows. Catalyzes a trans-dehydration via an enolate intermediate. The chain is 3-dehydroquinate dehydratase from Brucella canis (strain ATCC 23365 / NCTC 10854 / RM-666).